Here is a 219-residue protein sequence, read N- to C-terminus: HTH-type transcriptional activator FasR (219 aa).

A disordered region spans residues 1 to 30 (MSDLANTAERRGEKRPAGGNRRGNRLPRDE). The region spanning 29-89 (DERRGQLLIA…AVLQRHVDNL (61 aa)) is the HTH tetR-type domain. Positions 52 to 71 (GMDEIADRAGVSKPVLYQHF) form a DNA-binding region, H-T-H motif.

In terms of assembly, homodimer.

FasR:DNA binding is regulated by long-chain acyl-CoAs (C14- to C26-CoA), which act as effector molecules that modulate the affinity of FasR for its DNA binding sequences and therefore modulate the expression of the essential fas-acpS operon. Transcriptional activator that plays a central role in sensing mycobacterial long-chain fatty acids and regulating lipid biosynthesis. Activates the expression of the genes encoding the fatty acid synthase (fas) and the 4-phosphopantetheinyl transferase (acpS), whose products are involved in the fatty acid and mycolic acid biosynthesis. Specifically binds to three conserved operator sequences present in the fas-acpS promoter region. Essential for M.smegmatis viability. This Mycolicibacterium smegmatis (strain ATCC 700084 / mc(2)155) (Mycobacterium smegmatis) protein is HTH-type transcriptional activator FasR.